The following is a 221-amino-acid chain: Ras-related protein Rab-28 (221 aa).

The residue at position 2 (serine 2) is an N-acetylserine. A Phosphoserine modification is found at serine 8. Residues glycine 21, glycine 24, lysine 25, threonine 26, serine 27, glycine 38, lysine 39, tyrosine 41, and threonine 44 each contribute to the GTP site. Residue threonine 26 coordinates Mg(2+). A switch I region spans residues 35-49 (ETFGKQYKQTIGLDF). Positions 44 and 68 each coordinate Mg(2+). The interval 68-85 (DIGGQTIGGKMLDKYIYG) is switch II. Residues glycine 71, asparagine 129, lysine 130, aspartate 132, alanine 160, and lysine 161 each coordinate GTP. Cysteine 218 carries the post-translational modification Cysteine methyl ester. Cysteine 218 is lipidated: S-farnesyl cysteine. Positions 219 to 221 (AVQ) are cleaved as a propeptide — removed in mature form.

It belongs to the small GTPase superfamily. Rab family. In terms of assembly, interacts (prenylated form) with PDE6D; the interaction promotes RAB28 delivery to the photoreceptor outer segments. Interacts with KCNJ13; the interaction may facilitate cone outer segments phagocytosis. Interacts with RELA; the interaction contributes to RELA transport from cytoplasm to nucleus. The cofactor is Mg(2+). Isoprenylated.

The protein resides in the cell membrane. It is found in the cytoplasm. Its subcellular location is the cytoskeleton. The protein localises to the cilium basal body. It localises to the nucleus. It catalyses the reaction GTP + H2O = GDP + phosphate + H(+). Its activity is regulated as follows. Regulated by guanine nucleotide exchange factors (GEFs) which promote the exchange of bound GDP for free GTP. Regulated by GTPase activating proteins (GAPs) which increase the GTP hydrolysis activity. Inhibited by GDP dissociation inhibitors (GDIs). The small GTPases Rab are key regulators of intracellular membrane trafficking, from the formation of transport vesicles to their fusion with membranes. Rabs cycle between an inactive GDP-bound form and an active GTP-bound form that is able to recruit to membranes different sets of downstream effectors directly responsible for vesicle formation, movement, tethering and fusion. RAB28 is required for shedding and phagocytosis of cone cell outer segments (OS) discs in the retina. Also participates in nuclear factor kappa-B p65/RELA nuclear transport in endothelial cells. This is Ras-related protein Rab-28 (RAB28) from Bos taurus (Bovine).